A 738-amino-acid chain; its full sequence is NADH dehydrogenase [ubiquinone] iron-sulfur protein 1, mitochondrial (738 aa).

The transit peptide at 1 to 27 directs the protein to the mitochondrion; sequence MGLGLLASRALRSSRIIRNSTRTIVST. One can recognise a 2Fe-2S ferredoxin-type domain in the interval 66 to 144; it reads DVIEVFVDGY…GMKIKTDTPI (79 aa). [2Fe-2S] cluster contacts are provided by Cys-100, Cys-111, Cys-114, and Cys-128. Residues 144–183 form the 4Fe-4S His(Cys)3-ligated-type domain; the sequence is IAKKAREGVMEFLLMNHPLDCPICDQGGECDLQDQSMAFG. [4Fe-4S] cluster-binding residues include His-160, Cys-164, Cys-167, Cys-173, Cys-212, Cys-215, Cys-218, and Cys-262. Positions 281-337 constitute a 4Fe-4S Mo/W bis-MGD-type domain; sequence LKGTESIDVTDAVGSNIRIDSRGPEVMRVVPRLNEDINEEWISDKTRFFYDGLKRQR.

Belongs to the complex I 75 kDa subunit family. In terms of assembly, complex I is composed of about 45 different subunits. This is a component of the iron-sulfur (IP) fragment of the enzyme. [2Fe-2S] cluster is required as a cofactor. Requires [4Fe-4S] cluster as cofactor.

Its subcellular location is the mitochondrion inner membrane. It carries out the reaction a ubiquinone + NADH + 5 H(+)(in) = a ubiquinol + NAD(+) + 4 H(+)(out). In terms of biological role, core subunit of the mitochondrial membrane respiratory chain NADH dehydrogenase (Complex I) that is believed to belong to the minimal assembly required for catalysis. Complex I functions in the transfer of electrons from NADH to the respiratory chain. The immediate electron acceptor for the enzyme is believed to be ubiquinone. This is the largest subunit of complex I and it is a component of the iron-sulfur (IP) fragment of the enzyme. It may form part of the active site crevice where NADH is oxidized. The protein is NADH dehydrogenase [ubiquinone] iron-sulfur protein 1, mitochondrial of Solanum tuberosum (Potato).